The primary structure comprises 197 residues: RNA pyrophosphohydrolase (197 aa).

The region spanning 6–149 (GYRPNVGIVI…KRDVYRRAMK (144 aa)) is the Nudix hydrolase domain. A Nudix box motif is present at residues 38–59 (GGINEGETPEQAMFRELFEEVG). Residues 170 to 197 (ETKKAETGKKQPYYHKYAPQNKKGRKRR) are disordered.

This sequence belongs to the Nudix hydrolase family. RppH subfamily. Requires a divalent metal cation as cofactor.

Its function is as follows. Accelerates the degradation of transcripts by removing pyrophosphate from the 5'-end of triphosphorylated RNA, leading to a more labile monophosphorylated state that can stimulate subsequent ribonuclease cleavage. This is RNA pyrophosphohydrolase from Actinobacillus succinogenes (strain ATCC 55618 / DSM 22257 / CCUG 43843 / 130Z).